The primary structure comprises 307 residues: Fructose-bisphosphate aldolase (307 aa).

Serine 49 is a binding site for D-glyceraldehyde 3-phosphate. The active-site Proton donor is aspartate 82. The Zn(2+) site is built by histidine 83, aspartate 104, glutamate 134, and histidine 180. Glycine 181 contacts dihydroxyacetone phosphate. Position 210 (histidine 210) interacts with Zn(2+). Dihydroxyacetone phosphate-binding positions include 211–213 and 253–256; these read GAS and NTDT.

It belongs to the class II fructose-bisphosphate aldolase family. As to quaternary structure, homodimer. Requires Zn(2+) as cofactor.

It catalyses the reaction beta-D-fructose 1,6-bisphosphate = D-glyceraldehyde 3-phosphate + dihydroxyacetone phosphate. It functions in the pathway carbohydrate degradation; glycolysis; D-glyceraldehyde 3-phosphate and glycerone phosphate from D-glucose: step 4/4. In terms of biological role, catalyzes the aldol condensation of dihydroxyacetone phosphate (DHAP or glycerone-phosphate) with glyceraldehyde 3-phosphate (G3P) to form fructose 1,6-bisphosphate (FBP) in gluconeogenesis and the reverse reaction in glycolysis. In Helicobacter pylori (strain ATCC 700392 / 26695) (Campylobacter pylori), this protein is Fructose-bisphosphate aldolase (fba).